The primary structure comprises 546 residues: Amidase FG08078 (546 aa).

Active-site charge relay system residues include lysine 129 and serine 204. Serine 228 serves as the catalytic Acyl-ester intermediate.

This sequence belongs to the amidase family.

The protein operates within mycotoxin biosynthesis. Its function is as follows. Amidase; part of the gene cluster that mediates the biosynthesis of butenolide, a mycotoxin that shows antibiotic activity but does not seem to play a major role in the spread of head blight in wheat. Butenolide is derived from glutamic acid via a 4-acetamido-2-butenoic acid intermediate. The predicted function of the NADH:flavin oxidoreductase FG08077, the cytochrome P450 monooxygenase FG08079, the decarboxylase FG08083, and the putative acetyltransferase FG08082 are consistent with this pathway, however, the respective activities of the butelonide biosynthesis cluster enzymes have still to be experimentally determined. The chain is Amidase FG08078 from Gibberella zeae (strain ATCC MYA-4620 / CBS 123657 / FGSC 9075 / NRRL 31084 / PH-1) (Wheat head blight fungus).